Consider the following 476-residue polypeptide: Protein transport protein Sec61 subunit alpha isoform 2 (476 aa).

The Cytoplasmic segment spans residues 1–33 (MGIKFLEVIKPFCAVLPEIQKPERKIQFREKVL). The helical transmembrane segment at 34–53 (WTAITLFIFLVCCQIPLFGI) threads the bilayer. At 54-76 (MSSDSADPFYWMRVILASNRGTL) the chain is on the lumenal side. Residues 77–96 (MELGISPIVTSGLIMQLLAG) traverse the membrane as a helical segment. Residues 97–117 (AKIIEVGDTPKDRALFNGAQK) are Cytoplasmic-facing. A helical membrane pass occupies residues 118-138 (LFGMIITIGQAIVYVMTGMYG). Residues 139 to 144 (DPAEMG) are Lumenal-facing. The helical transmembrane segment at 145 to 165 (AGICLLIIIQLFVAGLIVLLL) threads the bilayer. The Cytoplasmic portion of the chain corresponds to 166-172 (DELLQKG). A helical membrane pass occupies residues 173 to 193 (YGLGSGISLFIATNICETIVW). The Lumenal segment spans residues 194–240 (KAFSPTTINTGRGTEFEGAVIALFHLLATRTDKVRALREAFYRQNLP). A helical membrane pass occupies residues 241–261 (NLMNLIATVFVFAVVIYFQGF). Over 262-288 (RVDLPIKSARYRGQYSSYPIKLFYTSN) the chain is Cytoplasmic. A helical membrane pass occupies residues 289 to 309 (IPIILQSALVSNLYVISQMLS). Residues 310-354 (VRFSGNFLVNLLGQWADVSGGGPARSYPVGGLCYYLSPPESMGAI) are Lumenal-facing. The helical transmembrane segment at 355-375 (FEDPVHVVVYIIFMLGSCAFF) threads the bilayer. Residues 376–420 (SKTWIEVSGSSAKDVAKQLKEQQMVMRGHRDTSMVHELNRYIPTA) are Cytoplasmic-facing. Residues 421-441 (AAFGGLCIGALSVLADFLGAI) traverse the membrane as a helical segment. Topologically, residues 442-445 (GSGT) are lumenal. A helical membrane pass occupies residues 446-462 (GILLAVTIIYQYFEIFV). Residues 463-476 (KEQAEVGGMGALFF) lie on the Cytoplasmic side of the membrane.

Belongs to the SecY/SEC61-alpha family. The SEC61 channel-forming translocon complex consists of channel-forming core components SEC61A1, SEC61B and SEC61G and different auxiliary components such as SEC62 and SEC63.

It is found in the endoplasmic reticulum membrane. In terms of biological role, component of SEC61 channel-forming translocon complex that mediates transport of signal peptide-containing precursor polypeptides across the endoplasmic reticulum (ER). Forms a ribosome receptor and a gated pore in the ER membrane, both functions required for cotranslational translocation of nascent polypeptides. The sequence is that of Protein transport protein Sec61 subunit alpha isoform 2 (SEC61A2) from Homo sapiens (Human).